A 1234-amino-acid chain; its full sequence is MSSAPRRPASGADSLHTPEPESLSPGTPGFPEQEEEDELRTLGVERFEEILQEAGSRGGEEPGRSYGEEDFEYHRQSSHHIHHPLSTHLPPDARRRKTPQGPGRKPRRRPGASPTGETPTIEEGEEDEDEVGEAEGFRAPPQQPSPASSPSAVQFFLQEDEGTDRKAERTSPSPPTQTPHQEAAPRASKGAQTGTLVEEMVAVASGTAGGDDGGAAGRPLTKAQPGHRSYNLQERRRIGSMTGVEQALLPRVPTDESEAQTLATADLDLMKSHRFEDVPGVRRHLVRKNAKGSTQAAREGREPGPTPRARPRAPHKPHEVFVELNELQLDKNQEPQWRETARWIKFEEDVEEETERWGKPHVASLSFRSLLELRRTLAHGAVLLDLDQQTLPGVAHQVVEQMVISDQIKAEDRANVLRALLLKHSHPSDEKEFSFPRNISAGSLGSLLGHHHAQGTESDPHVTEPLIGGVPETRLEVDRERELPPPAPPAGITRSKSKHELKLLEKIPENAEATVVLVGCVEFLSRPTMAFVRLREAVELDAVLEVPVPVRFLFLLLGPSSANMDYHEIGRSISTLMSDKQFHEAAYLADERDDLLTAINAFLDCSVVLPPSEVQGEELLRSVAHFQRQMLKKREEQGRLLPPGAGLEPKSAQDKALLQMVEVAGAAEDDPLRRTGRPFGGLIRDVRRRYPHYLSDFRDALDPQCLAAVIFIYFAALSPAITFGGLLGEKTQDLIGVSELIMSTALQGVIFCLLGAQPLLVIGFSGPLLVFEEAFFSFCKSNQLEYLVGRVWIGFWLVLLALLMVALEGSFLVRFVSRFTQEIFAFLISLIFIYETFYKLIKIFQEHPLHGCSVSNDSEADSSSNNMTWAATTLAPDNSSASGQERPRGQPNTALLSLVLMAGTFFIAFFLRKFKNSRFFPGRIRRVIGDFGVPIAILIMVLVDYSIEDTYTQKLSVPSGFSVTAPDKRGWVINPLGEKTPFPVWMMVASLLPAVLVFILIFMETQITTLIISKKERMLQKGSGFHLDLLLIVAMGGICALFGLPWLAAATVRSVTHANALTVMSKAVAPGDKPKIQEVKEQRVTGLLVALLVGLSMVIGDLLRQIPLAVLFGIFLYMGVTSLNGIQFYERLHLLLMPPKHHPDVTYVKKVRTMRMHLFTALQLLCLALLWAVMSTAASLAFPFILILTVPLRMVVLTRIFTEREMKCLDANEAEPVFDECEGVDEYNEMPMPV.

The interval 1–239 (MSSAPRRPAS…YNLQERRRIG (239 aa)) is disordered. Topologically, residues 1–704 (MSSAPRRPAS…SDFRDALDPQ (704 aa)) are cytoplasmic. Basic and acidic residues-rich tracts occupy residues 39 to 49 (LRTLGVERFEE) and 58 to 75 (GGEE…EYHR). Basic residues-rich tracts occupy residues 76 to 85 (QSSHHIHHPL) and 94 to 110 (RRRK…RRRP). The residue at position 113 (serine 113) is a Phosphoserine. Over residues 120–133 (TIEEGEEDEDEVGE) the composition is skewed to acidic residues. Phosphoserine occurs at positions 145, 171, and 173. Over residues 207–216 (TAGGDDGGAA) the composition is skewed to gly residues. A Phosphoserine modification is found at serine 240. Residue threonine 254 is modified to Phosphothreonine. Lysine 271 bears the N6-methyllysine mark. Residues 287 to 315 (RKNAKGSTQAAREGREPGPTPRARPRAPH) form a disordered region. Serine 440 carries the post-translational modification Phosphoserine. Residues 446–467 (SLLGHHHAQGTESDPHVTEPLI) are disordered. 4 helical membrane passes run 705–728 (CLAA…GLLG), 734–771 (LIGV…LLVF), 791–813 (VWIG…SFLV), and 823–843 (IFAF…LIKI). The interval 705–1234 (CLAAVIFIYF…DEYNEMPMPV (530 aa)) is membrane (anion exchange). Over 844–893 (FQEHPLHGCSVSNDSEADSSSNNMTWAATTLAPDNSSASGQERPRGQPNT) the chain is Extracellular. Residues asparagine 856, asparagine 866, and asparagine 878 are each glycosylated (N-linked (GlcNAc...) asparagine). A helical membrane pass occupies residues 894-911 (ALLSLVLMAGTFFIAFFL). Residues 912-926 (RKFKNSRFFPGRIRR) are Cytoplasmic-facing. Transmembrane regions (helical) follow at residues 927–947 (VIGD…DYSI), 981–1003 (PFPV…LIFM), 1029–1050 (LLLI…LAAA), 1084–1129 (VTGL…IQFY), and 1156–1192 (MHLF…TVPL). Residue cysteine 1166 is the site of S-palmitoyl cysteine attachment.

Belongs to the anion exchanger (TC 2.A.31) family. As to expression, expressed in the parotid and submandibular glands (at protein level). Expressed in the gastric mucosa (at protein level). Expressed in the choroid plexus epithelium (at protein level). Expressed in the liver and gallbladder.

The protein localises to the apical cell membrane. The protein resides in the basolateral cell membrane. The enzyme catalyses hydrogencarbonate(in) + chloride(out) = hydrogencarbonate(out) + chloride(in). Inhibited by 4,4'-diisothiocyanatostilbene-2,2'-disulfonic acid (DIDS). In terms of biological role, sodium-independent anion exchanger which mediates the electroneutral exchange of chloride for bicarbonate ions across the cell membrane. Plays an important role in osteoclast differentiation and function. Regulates bone resorption and calpain-dependent actin cytoskeleton organization in osteoclasts via anion exchange-dependent control of pH. Essential for intracellular pH regulation in CD8(+) T-cells upon CD3 stimulation, modulating CD8(+) T-cell responses. In Rattus norvegicus (Rat), this protein is Anion exchange protein 2 (Slc4a2).